The following is a 388-amino-acid chain: MSWWWAGAIGAAKKKIDEDEAPRNYESVALIVGVTGIVGNSLAEILPLSDTPGGPWKVYGVARRPRPSWNEDHPITYISCDVLDSVDVEAKLSPLTDVTHIFYATWTKRSTEKENCEANGKMLKNVLNAMIPNCPNLKHICLQTGRKHYLGAFEDLKSKCHDPPLTEDLPRLDSQNYYYTQEDILFEEVQKKEGLTWSVHRPGTIFGFSPYSMMNLVGTLCVYAAICKHEGAVLRFPGCKGAWDGYSDCSDADLIAEHQIWAAVDPYAKNEAFNVSNGDVFKWKHFWKVLAEQFGVECGEYEEGQQVKLQDLMKDKGPVWDKIVRENGLSTTKLEDVGNWWFSDIVLGNECWLDTMNKSKEHGFLGFRNSKNSFISWIDKVKAFKIVP.

NADP(+) is bound by residues 35 to 37, 63 to 64, 81 to 82, 105 to 106, and Gln143; these read TGI, RR, DV, and TW. Active-site residues include Lys147 and Tyr178. NADP(+) contacts are provided by residues Tyr178, Ile205, and 212–214; that span reads SMM.

It belongs to the short-chain dehydrogenases/reductases (SDR) family.

The catalysed reaction is (S)-8-oxocitronellyl enol + NADP(+) = (6E)-8-oxogeranial + NADPH + H(+). It carries out the reaction (S)-8-oxocitronellyl enol + NAD(+) = (6E)-8-oxogeranial + NADH + H(+). Its function is as follows. Iridoid synthase that catalyzes the first step in generation of the iridoid ring scaffold using the linear monoterpene (6E)-8-oxogeranial as substrate. Iridoids comprise a large family of distinctive bicyclic monoterpenes that possess a wide range of pharmacological activities, including anticancer, anti-inflammatory, antifungal and antibacterial activities. Catalyzes the conversion of the linear monoterpene (6E)-8-oxogeranial to (S)-8-oxocitronellyl enol, a precursor of nepetalactones, which are metabolites that are both insect-repellent and have euphoric effect in cats. The chain is (S)-8-oxocitronellyl enol synthase ISY1 from Nepeta cataria (Catnip).